A 180-amino-acid polypeptide reads, in one-letter code: UPF0227 protein ECA1814 (180 aa).

It belongs to the UPF0227 family.

The sequence is that of UPF0227 protein ECA1814 from Pectobacterium atrosepticum (strain SCRI 1043 / ATCC BAA-672) (Erwinia carotovora subsp. atroseptica).